The sequence spans 293 residues: MALRLDGKALAATVERRLTSVVDAHSKTVGQPPGLAVLRVGDDPASAVYVANKEKACARVGIASYGAHLAADTPADQVLSTIQSLNADPRVDGILLQLPLPKGLDERPLLEAIDPEKDADGLHTLNLGRLLKGEPGPRSCTPAGVMALLRSNGIDPAGQRAVVIGRSILVGQPMALMLQAANATVTVAHSRTADLAAHTREADIVVVAAGRPGMVGAEHVRPGAAVVDVGIHRKPEGGLCGDVVAEEVEPIAAALSPVPGGVGPMTVTMLLVNTVVAWCRRHGIDHELDDLIG.

Residues 165–167 (GRS), S190, and I231 each bind NADP(+).

Belongs to the tetrahydrofolate dehydrogenase/cyclohydrolase family. Homodimer.

It carries out the reaction (6R)-5,10-methylene-5,6,7,8-tetrahydrofolate + NADP(+) = (6R)-5,10-methenyltetrahydrofolate + NADPH. The catalysed reaction is (6R)-5,10-methenyltetrahydrofolate + H2O = (6R)-10-formyltetrahydrofolate + H(+). The protein operates within one-carbon metabolism; tetrahydrofolate interconversion. In terms of biological role, catalyzes the oxidation of 5,10-methylenetetrahydrofolate to 5,10-methenyltetrahydrofolate and then the hydrolysis of 5,10-methenyltetrahydrofolate to 10-formyltetrahydrofolate. This Parasynechococcus marenigrum (strain WH8102) protein is Bifunctional protein FolD.